Consider the following 270-residue polypeptide: 3-methyl-2-oxobutanoate hydroxymethyltransferase (270 aa).

Positions 48 and 87 each coordinate Mg(2+). 3-methyl-2-oxobutanoate-binding positions include D48–S49, D87, and K117. E119 contributes to the Mg(2+) binding site. Catalysis depends on E186, which acts as the Proton acceptor.

It belongs to the PanB family. In terms of assembly, homodecamer; pentamer of dimers. Mg(2+) is required as a cofactor.

It localises to the cytoplasm. The catalysed reaction is 3-methyl-2-oxobutanoate + (6R)-5,10-methylene-5,6,7,8-tetrahydrofolate + H2O = 2-dehydropantoate + (6S)-5,6,7,8-tetrahydrofolate. Its pathway is cofactor biosynthesis; (R)-pantothenate biosynthesis; (R)-pantoate from 3-methyl-2-oxobutanoate: step 1/2. Catalyzes the reversible reaction in which hydroxymethyl group from 5,10-methylenetetrahydrofolate is transferred onto alpha-ketoisovalerate to form ketopantoate. The sequence is that of 3-methyl-2-oxobutanoate hydroxymethyltransferase from Synechococcus sp. (strain RCC307).